The sequence spans 81 residues: MPNCYNNMTEFYLASYLQFASSGYHYTGTCALGKVVDPNTGLVYGFENLYVTDASVVPKTPRGNTQATTYVVSGKLSEKIF.

The protein belongs to the GMC oxidoreductase family.

This chain is Putative truncated GMC-type inactive oxidoreductase R833, found in Acanthamoeba polyphaga mimivirus (APMV).